Here is a 150-residue protein sequence, read N- to C-terminus: MIIGNIHNLQPWLPQELRQAIEHIKAHVTAETPKGKHDIEGNRLFYLISEDMTEPYEARRAEYHARYLDIQIVLKGQEGMTFSTQPAGAPDTDWLADKDIAFLPEGVDEKTVILNEGDFVVFYPGEVHKPLCAVGAPAQVRKAVVKMLMA.

K36 is modified (N6-acetyllysine).

This sequence belongs to the TabA/YiaL family.

In terms of biological role, influences biofilm formation. Represses fimbria genes in 8 hours biofilms. May act in response to the combined activity of several toxin-antitoxin (TA) systems. This Escherichia coli (strain K12) protein is Toxin-antitoxin biofilm protein TabA (tabA).